Consider the following 99-residue polypeptide: DNA-binding protein Fis (99 aa).

Positions 75–94 form a DNA-binding region, H-T-H motif; sequence QTRAANMLGINRGTLRKKLK.

This sequence belongs to the transcriptional regulatory Fis family. Homodimer.

Its function is as follows. Activates ribosomal RNA transcription. Plays a direct role in upstream activation of rRNA promoters. This Haemophilus influenzae (strain 86-028NP) protein is DNA-binding protein Fis.